A 742-amino-acid chain; its full sequence is Clamp-binding protein CrfC (742 aa).

The interval 41 to 45 (QLALP) is clamp-binding consensus. Residues 66–402 (SRLEMVLAIV…LWEDSLFAQP (337 aa)) form the Dynamin-type G domain. Residues 76 to 83 (GTMKAGKS) are G1 motif. Residues 102-104 (MTA) form a G2 motif region. The interval 236-239 (DTPG) is G3 motif. The segment at 297 to 300 (NKFD) is G4 motif. The interval 331 to 334 (FPVS) is G5 motif. Residues 440-472 (RAHGLNVACEQLRQNIHQVEESLQLLQLNQAQV) adopt a coiled-coil conformation.

The protein belongs to the TRAFAC class dynamin-like GTPase superfamily. Dynamin/Fzo/YdjA family. As to quaternary structure, forms homooligomers. Binds to the beta sliding clamp processivity factor (DnaN) in the presence and absence of DNA, may bind to the clamp itself as homodimers or trimers. Homooligomers may be able to bind more than 1 clamp complex.

It localises to the cytoplasm. In terms of biological role, important for the colocalization of sister nascent DNA strands after replication fork passage during DNA replication, and for positioning and subsequent partitioning of sister chromosomes. Does not have GTPase activity on its own. This chain is Clamp-binding protein CrfC (crfC), found in Escherichia coli.